Consider the following 1384-residue polypeptide: DNA-directed RNA polymerase subunit beta (1384 aa).

This sequence belongs to the RNA polymerase beta chain family. The RNAP catalytic core consists of 2 alpha, 1 beta, 1 beta' and 1 omega subunit. When a sigma factor is associated with the core the holoenzyme is formed, which can initiate transcription.

The enzyme catalyses RNA(n) + a ribonucleoside 5'-triphosphate = RNA(n+1) + diphosphate. Its function is as follows. DNA-dependent RNA polymerase catalyzes the transcription of DNA into RNA using the four ribonucleoside triphosphates as substrates. The sequence is that of DNA-directed RNA polymerase subunit beta from Xylella fastidiosa (strain M23).